The following is a 397-amino-acid chain: GPI mannosyltransferase 1 (397 aa).

9 helical membrane-spanning segments follow: residues Glu5–Tyr25, Trp79–Met99, Leu111–Thr128, Gly156–Ile176, Leu193–Ile213, Trp257–Trp277, Tyr307–Ala327, Ile330–Leu350, and Leu362–Leu382.

The protein belongs to the PIGM family.

It is found in the endoplasmic reticulum membrane. Its pathway is glycolipid biosynthesis; glycosylphosphatidylinositol-anchor biosynthesis. Mannosyltransferase involved in glycosylphosphatidylinositol-anchor biosynthesis. Transfers the first alpha-1,4-mannose to GlcN-acyl-PI during GPI precursor assembly. Required for cell wall integrity. The sequence is that of GPI mannosyltransferase 1 (GPI14) from Eremothecium gossypii (strain ATCC 10895 / CBS 109.51 / FGSC 9923 / NRRL Y-1056) (Yeast).